The chain runs to 131 residues: Small ribosomal subunit protein uS12 (131 aa).

A disordered region spans residues 1–32 (MPTFSQLVRKGRTAPRYKTASPALQGSPQRRG). 3-methylthioaspartic acid is present on aspartate 89. Positions 110–131 (RKQGRSKYGAKRAKGGAAAGKK) are disordered. Positions 111-131 (KQGRSKYGAKRAKGGAAAGKK) are enriched in basic residues.

It belongs to the universal ribosomal protein uS12 family. Part of the 30S ribosomal subunit. Contacts proteins S8 and S17. May interact with IF1 in the 30S initiation complex.

In terms of biological role, with S4 and S5 plays an important role in translational accuracy. Interacts with and stabilizes bases of the 16S rRNA that are involved in tRNA selection in the A site and with the mRNA backbone. Located at the interface of the 30S and 50S subunits, it traverses the body of the 30S subunit contacting proteins on the other side and probably holding the rRNA structure together. The combined cluster of proteins S8, S12 and S17 appears to hold together the shoulder and platform of the 30S subunit. This Acidobacterium capsulatum (strain ATCC 51196 / DSM 11244 / BCRC 80197 / JCM 7670 / NBRC 15755 / NCIMB 13165 / 161) protein is Small ribosomal subunit protein uS12.